We begin with the raw amino-acid sequence, 389 residues long: Acyl-[acyl-carrier-protein] dehydrogenase MbtN (389 aa).

The protein belongs to the acyl-CoA dehydrogenase family. FAD serves as cofactor.

It functions in the pathway siderophore biosynthesis; mycobactin biosynthesis. Its function is as follows. Catalyzes the dehydrogenation at the alpha-beta position of ACP-bound acyl chains. This results in the introduction of a double bond in the lipidic chain, which is further transferred to the epsilon-amino group of lysine residue in the mycobactin core by MbtK. This chain is Acyl-[acyl-carrier-protein] dehydrogenase MbtN (mbtN), found in Mycobacterium sp. (strain MCS).